The sequence spans 154 residues: Endoribonuclease YbeY (154 aa).

Zn(2+) is bound by residues His113, His117, and His123.

Belongs to the endoribonuclease YbeY family. Zn(2+) is required as a cofactor.

It is found in the cytoplasm. Its function is as follows. Single strand-specific metallo-endoribonuclease involved in late-stage 70S ribosome quality control and in maturation of the 3' terminus of the 16S rRNA. The polypeptide is Endoribonuclease YbeY (Verminephrobacter eiseniae (strain EF01-2)).